The chain runs to 263 residues: Endonuclease 8 (263 aa).

Pro2 acts as the Schiff-base intermediate with DNA in catalysis. The active-site Proton donor is the Glu3. The Proton donor; for beta-elimination activity role is filled by Lys53. Gln70, Arg125, and Asn169 together coordinate DNA. The FPG-type zinc-finger motif lies at 229-263 (KVFHRDGEPCERCGSIIEKTTLSSRPFYWCPGCQH). The active-site Proton donor; for delta-elimination activity is Arg253.

The protein belongs to the FPG family. The cofactor is Zn(2+).

It catalyses the reaction 2'-deoxyribonucleotide-(2'-deoxyribose 5'-phosphate)-2'-deoxyribonucleotide-DNA = a 3'-end 2'-deoxyribonucleotide-(2,3-dehydro-2,3-deoxyribose 5'-phosphate)-DNA + a 5'-end 5'-phospho-2'-deoxyribonucleoside-DNA + H(+). Involved in base excision repair of DNA damaged by oxidation or by mutagenic agents. Acts as a DNA glycosylase that recognizes and removes damaged bases. Has a preference for oxidized pyrimidines, such as thymine glycol, 5,6-dihydrouracil and 5,6-dihydrothymine. Has AP (apurinic/apyrimidinic) lyase activity and introduces nicks in the DNA strand. Cleaves the DNA backbone by beta-delta elimination to generate a single-strand break at the site of the removed base with both 3'- and 5'-phosphates. The chain is Endonuclease 8 from Escherichia coli O9:H4 (strain HS).